The following is a 221-amino-acid chain: Thymidylate kinase (221 aa).

12–19 (GIDGAGKS) lines the ATP pocket.

It belongs to the thymidylate kinase family.

It carries out the reaction dTMP + ATP = dTDP + ADP. Its function is as follows. Phosphorylation of dTMP to form dTDP in both de novo and salvage pathways of dTTP synthesis. This chain is Thymidylate kinase, found in Paracidovorax citrulli (strain AAC00-1) (Acidovorax citrulli).